The chain runs to 213 residues: Probable RNA 2'-phosphotransferase (213 aa).

It belongs to the KptA/TPT1 family.

Functionally, removes the 2'-phosphate from RNA via an intermediate in which the phosphate is ADP-ribosylated by NAD followed by a presumed transesterification to release the RNA and generate ADP-ribose 1''-2''-cyclic phosphate (APPR&gt;P). May function as an ADP-ribosylase. The chain is Probable RNA 2'-phosphotransferase from Pyrobaculum aerophilum (strain ATCC 51768 / DSM 7523 / JCM 9630 / CIP 104966 / NBRC 100827 / IM2).